The sequence spans 432 residues: Alpha-galactosidase (432 aa).

NAD(+) is bound at residue 2 to 68 (KKITFIGAGS…PSVAINSYDD (67 aa)). Asparagine 148 serves as a coordination point for substrate. Residue cysteine 169 coordinates Mn(2+). The active-site Proton donor is the histidine 170. Histidine 199 is a Mn(2+) binding site.

This sequence belongs to the glycosyl hydrolase 4 family. Homodimer. Requires Mn(2+) as cofactor. NAD(+) is required as a cofactor.

It localises to the cytoplasm. The catalysed reaction is Hydrolysis of terminal, non-reducing alpha-D-galactose residues in alpha-D-galactosides, including galactose oligosaccharides, galactomannans and galactolipids.. Catalyzes the hydrolysis of melibiose and alpha-galactosides of the raffinose family of oligosaccharides (RFOs) such as raffinose and stachyose. Cannot act on polymeric substrates such as locust bean gum. The sequence is that of Alpha-galactosidase from Bacillus subtilis (strain 168).